We begin with the raw amino-acid sequence, 371 residues long: Peptide chain release factor 2 (371 aa).

Gln253 carries the post-translational modification N5-methylglutamine.

Belongs to the prokaryotic/mitochondrial release factor family. Methylated by PrmC. Methylation increases the termination efficiency of RF2.

Its subcellular location is the cytoplasm. Functionally, peptide chain release factor 2 directs the termination of translation in response to the peptide chain termination codons UGA and UAA. The polypeptide is Peptide chain release factor 2 (Mycobacterium ulcerans (strain Agy99)).